The chain runs to 178 residues: Nicotinamide-nucleotide adenylyltransferase (178 aa).

It belongs to the archaeal NMN adenylyltransferase family.

Its subcellular location is the cytoplasm. The catalysed reaction is beta-nicotinamide D-ribonucleotide + ATP + H(+) = diphosphate + NAD(+). Its pathway is cofactor biosynthesis; NAD(+) biosynthesis; NAD(+) from nicotinamide D-ribonucleotide: step 1/1. The protein is Nicotinamide-nucleotide adenylyltransferase of Pyrobaculum arsenaticum (strain DSM 13514 / JCM 11321 / PZ6).